The primary structure comprises 440 residues: Serine protease inhibitor A3G (440 aa).

Positions 357-382 (GTEAAAATGMAGVGCCAVFDFLEIFF) are RCL.

This sequence belongs to the serpin family. Expressed in bone marrow (particularly hematopoietic stem cells), heart, kidney, liver, lung, skeletal muscle, spleen, testis, thymus and T-cells.

The protein localises to the cytoplasm. The protein resides in the nucleus. Its function is as follows. Serine and cysteine protease inhibitor. Can inhibit lysosomal papain-like proteases including the cathepsins B, G, H, K, L and V. Ineffective against elastase, granzyme A, granzyme B, or caspases 3, 8 or 9. Inhibition of cytoplasmic cathepsin B following release from the lysosome may protect cells from apoptosis. This may facilitate the survival of progenitor T-cells and the subsequent development of long term memory CD8 T-cells. This is Serine protease inhibitor A3G (Serpina3g) from Mus musculus (Mouse).